Reading from the N-terminus, the 51-residue chain is Sperm protamine P1 (51 aa).

It belongs to the protamine P1 family. As to expression, testis.

It localises to the nucleus. Its subcellular location is the chromosome. Protamines substitute for histones in the chromatin of sperm during the haploid phase of spermatogenesis. They compact sperm DNA into a highly condensed, stable and inactive complex. This is Sperm protamine P1 (PRM1) from Macaca mulatta (Rhesus macaque).